Here is a 552-residue protein sequence, read N- to C-terminus: Hydroxylamine reductase (552 aa).

The [2Fe-2S] cluster site is built by C5, C8, C20, and C27. Hybrid [4Fe-2O-2S] cluster is bound by residues H251, E275, C319, C407, C435, C460, E494, and K496. C407 bears the Cysteine persulfide mark.

The protein belongs to the HCP family. The cofactor is [2Fe-2S] cluster. Hybrid [4Fe-2O-2S] cluster serves as cofactor.

Its subcellular location is the cytoplasm. It carries out the reaction A + NH4(+) + H2O = hydroxylamine + AH2 + H(+). Functionally, catalyzes the reduction of hydroxylamine to form NH(3) and H(2)O. The protein is Hydroxylamine reductase of Escherichia coli (strain UTI89 / UPEC).